The following is a 308-amino-acid chain: Homoserine kinase (308 aa).

Pro95–Ala105 contacts ATP.

The protein belongs to the GHMP kinase family. Homoserine kinase subfamily.

The protein resides in the cytoplasm. The catalysed reaction is L-homoserine + ATP = O-phospho-L-homoserine + ADP + H(+). It functions in the pathway amino-acid biosynthesis; L-threonine biosynthesis; L-threonine from L-aspartate: step 4/5. Catalyzes the ATP-dependent phosphorylation of L-homoserine to L-homoserine phosphate. In Corynebacterium diphtheriae (strain ATCC 700971 / NCTC 13129 / Biotype gravis), this protein is Homoserine kinase.